A 198-amino-acid polypeptide reads, in one-letter code: Succinate dehydrogenase [ubiquinone] cytochrome b subunit, mitochondrial (198 aa).

Residues 1–50 (MSAMMVKLGLNKSALLLKPSAFSRAAALSSSRRLLFNTARTNFLSTSPLK) constitute a mitochondrion transit peptide. Residues 51–99 (NVASEMNTKAAIAEEQILNKQRAKRPISPHLTIYQPQLTWYLSSLHRIS) lie on the Mitochondrial matrix side of the membrane. A ubiquinone contacts are provided by serine 93 and arginine 97. Residues 100 to 120 (LVLMGLGFYLFTILFGVSGLL) traverse the membrane as a helical segment. Topologically, residues 121-139 (GLGLTTEKVSNWYHQKFSK) are mitochondrial intermembrane. Residues 140 to 160 (ITEWSIKGSFAYLFAIHYGGA) traverse the membrane as a helical segment. Histidine 156 is a binding site for heme. The Mitochondrial matrix portion of the chain corresponds to 161 to 175 (IRHLIWDTAKELTLK). A helical membrane pass occupies residues 176-196 (GVYRTGYALIGFTAVLGTYLL). The Mitochondrial intermembrane segment spans residues 197 to 198 (TL).

The protein belongs to the cytochrome b560 family. In terms of assembly, forms part of complex II containing four subunits: a flavoprotein (FP), an iron-sulfur protein (IP) and a cytochrome b composed of two integral membrane proteins. Heme serves as cofactor.

The protein localises to the mitochondrion inner membrane. Its pathway is carbohydrate metabolism; tricarboxylic acid cycle. In terms of biological role, membrane-anchoring mono-heme cytochrome b subunit of succinate dehydrogenase (SDH) that is involved in system II of the mitochondrial electron transport chain and is responsible for transferring electrons from succinate to ubiquinone (coenzyme Q). SDH3 and SDH4 form the membrane dimer that anchors the catalytic dimer formed by SDH1 and SDH2 to the matrix surface of the mitochondrial inner membrane. Electrons originating from the catalytic dimer enter the membrane dimer for ubiquinone reduction. In Saccharomyces cerevisiae (strain ATCC 204508 / S288c) (Baker's yeast), this protein is Succinate dehydrogenase [ubiquinone] cytochrome b subunit, mitochondrial (SDH3).